The following is a 350-amino-acid chain: DNA polymerase IV (350 aa).

Residues 4–185 enclose the UmuC domain; that stretch reads IIHIDMDCFY…LPLGKLPGIG (182 aa). 2 residues coordinate Mg(2+): aspartate 8 and aspartate 103. Glutamate 104 is an active-site residue.

Belongs to the DNA polymerase type-Y family. Monomer. Requires Mg(2+) as cofactor.

It is found in the cytoplasm. The enzyme catalyses DNA(n) + a 2'-deoxyribonucleoside 5'-triphosphate = DNA(n+1) + diphosphate. In terms of biological role, poorly processive, error-prone DNA polymerase involved in untargeted mutagenesis. Copies undamaged DNA at stalled replication forks, which arise in vivo from mismatched or misaligned primer ends. These misaligned primers can be extended by PolIV. Exhibits no 3'-5' exonuclease (proofreading) activity. May be involved in translesional synthesis, in conjunction with the beta clamp from PolIII. This chain is DNA polymerase IV, found in Aeromonas hydrophila subsp. hydrophila (strain ATCC 7966 / DSM 30187 / BCRC 13018 / CCUG 14551 / JCM 1027 / KCTC 2358 / NCIMB 9240 / NCTC 8049).